A 249-amino-acid polypeptide reads, in one-letter code: U1 small nuclear ribonucleoprotein usp102 (249 aa).

The tract at residues 1–25 is disordered; that stretch reads MDPQTNSHQEVQQPSPKETDSQTPS. The RRM 1 domain maps to 26–105; it reads ETLYIRNIEE…KPMMIQYSKS (80 aa). Residues 113 to 157 form a disordered region; it reads RESPEEIETRKKDRKNRREMLKRTSALQPAAPKPTHKKPVPKRNV. Residues 114-134 are compositionally biased toward basic and acidic residues; the sequence is ESPEEIETRKKDRKNRREMLK. The RRM 2 domain occupies 174 to 247; the sequence is KVLLLQNIPQ…NQIKVTFARK (74 aa).

It belongs to the RRM U1 A/B'' family. As to quaternary structure, component of the spliceosome where it is associated with snRNP U1.

It is found in the nucleus. The protein localises to the nucleolus. Involved in nuclear mRNA splicing. In Schizosaccharomyces pombe (strain 972 / ATCC 24843) (Fission yeast), this protein is U1 small nuclear ribonucleoprotein usp102.